Here is a 221-residue protein sequence, read N- to C-terminus: uncharacterized protein (221 aa).

Over 1–45 (MYAPIRSPITELNESTPSSIPVATSYATCSASFAKLVALLVDDMA) the chain is Extracellular. The chain crosses the membrane as a helical span at residues 46-66 (GLSIVLSEIYIYFKLLFLIVI). The Cytoplasmic segment spans residues 67–221 (TESIQNKLED…KYIVVIKVEQ (155 aa)).

Its subcellular location is the host membrane. This is an uncharacterized protein from Acidianus filamentous virus 1 (isolate United States/Yellowstone) (AFV-1).